The sequence spans 159 residues: Ribosomal RNA large subunit methyltransferase H (159 aa).

S-adenosyl-L-methionine is bound by residues leucine 76, glycine 108, and 127 to 132 (FSKMTF).

It belongs to the RNA methyltransferase RlmH family. In terms of assembly, homodimer.

The protein resides in the cytoplasm. It catalyses the reaction pseudouridine(1915) in 23S rRNA + S-adenosyl-L-methionine = N(3)-methylpseudouridine(1915) in 23S rRNA + S-adenosyl-L-homocysteine + H(+). Specifically methylates the pseudouridine at position 1915 (m3Psi1915) in 23S rRNA. The sequence is that of Ribosomal RNA large subunit methyltransferase H from Clostridium botulinum (strain Langeland / NCTC 10281 / Type F).